Here is a 98-residue protein sequence, read N- to C-terminus: NADH-ubiquinone oxidoreductase chain 4L (98 aa).

Helical transmembrane passes span 1-21 (MTSI…GVLI), 28-48 (STLL…ALLI), and 59-79 (APLI…ALLV).

This sequence belongs to the complex I subunit 4L family. In terms of assembly, core subunit of respiratory chain NADH dehydrogenase (Complex I) which is composed of 45 different subunits.

It localises to the mitochondrion inner membrane. It carries out the reaction a ubiquinone + NADH + 5 H(+)(in) = a ubiquinol + NAD(+) + 4 H(+)(out). In terms of biological role, core subunit of the mitochondrial membrane respiratory chain NADH dehydrogenase (Complex I) which catalyzes electron transfer from NADH through the respiratory chain, using ubiquinone as an electron acceptor. Part of the enzyme membrane arm which is embedded in the lipid bilayer and involved in proton translocation. The chain is NADH-ubiquinone oxidoreductase chain 4L (MT-ND4L) from Vombatus ursinus (Common wombat).